We begin with the raw amino-acid sequence, 597 residues long: Arginine--tRNA ligase (597 aa).

The span at 23-32 (QAAAARQASQ) shows a compositional bias: low complexity. The disordered stretch occupies residues 23–43 (QAAAARQASQPLDPQLAPASK). Residues 137 to 147 (PNIAKEMHVGH) carry the 'HIGH' region motif.

Belongs to the class-I aminoacyl-tRNA synthetase family. Monomer.

The protein localises to the cytoplasm. It carries out the reaction tRNA(Arg) + L-arginine + ATP = L-arginyl-tRNA(Arg) + AMP + diphosphate. This Synechococcus sp. (strain WH7803) protein is Arginine--tRNA ligase.